A 284-amino-acid polypeptide reads, in one-letter code: Diaminopimelate epimerase (284 aa).

Positions 14 and 67 each coordinate substrate. Catalysis depends on C76, which acts as the Proton donor. Substrate contacts are provided by residues 77–78 (GN), N166, N199, and 217–218 (ER). C226 acts as the Proton acceptor in catalysis. 227–228 (GT) provides a ligand contact to substrate.

This sequence belongs to the diaminopimelate epimerase family. As to quaternary structure, homodimer.

Its subcellular location is the cytoplasm. It carries out the reaction (2S,6S)-2,6-diaminopimelate = meso-2,6-diaminopimelate. It participates in amino-acid biosynthesis; L-lysine biosynthesis via DAP pathway; DL-2,6-diaminopimelate from LL-2,6-diaminopimelate: step 1/1. Functionally, catalyzes the stereoinversion of LL-2,6-diaminopimelate (L,L-DAP) to meso-diaminopimelate (meso-DAP), a precursor of L-lysine and an essential component of the bacterial peptidoglycan. The polypeptide is Diaminopimelate epimerase (Bacillus velezensis (strain DSM 23117 / BGSC 10A6 / LMG 26770 / FZB42) (Bacillus amyloliquefaciens subsp. plantarum)).